Reading from the N-terminus, the 428-residue chain is MKKQNLRSMAASAIEKVVEQGQSLSNILPPLQQKVSDKDKALLQELCFGVLRTLPQQEWLISKLMSRPMTGKQRTIHYLIMVGFYQLLHTRIPPHAALAETVEGAVVIKRPQLKGLINGVLRQFQRQQEELLAEFADSDKRFLHPEWLLKRLQKAYPSKWEAIVEANNQRPPMWLRVNRNHHTRDEWLALLETAEMNGFTHDAYPDAIRLASPAPVQALPGFEQGWVTVQDASAQGCMTYLEPQNGDHILDLCAAPGGKTTHILEIAPKASVMAVDVDEQRLSRVYDNLKRLGMKAEVKQGDGRTPGEWCGDEQFDRILVDAPCSATGVIRRHPDIKWLRRDRDINELAQLQSEILDAVWPHLKPGGTLVYATCSVLPEENSQQIAAFLKRTSNATLRTTGTPDKPGVQNLPGAEDGDGFFYAKLIKE.

S-adenosyl-L-methionine contacts are provided by residues 253 to 259, Asp-276, Asp-302, and Asp-321; that span reads CAAPGGK. Cys-374 (nucleophile) is an active-site residue.

Belongs to the class I-like SAM-binding methyltransferase superfamily. RsmB/NOP family.

The protein resides in the cytoplasm. It catalyses the reaction cytidine(967) in 16S rRNA + S-adenosyl-L-methionine = 5-methylcytidine(967) in 16S rRNA + S-adenosyl-L-homocysteine + H(+). In terms of biological role, specifically methylates the cytosine at position 967 (m5C967) of 16S rRNA. In Enterobacter sp. (strain 638), this protein is Ribosomal RNA small subunit methyltransferase B.